Consider the following 585-residue polypeptide: MNLFTDFEARINRILESIEIIREKRSELDFGRINVEPPRDASHGDVATNAAMVLAKPLGMNPRALADLIVDKLGQDPEVAGVSVAGPGFINVRLSVSYWQKLLAAITRAGVDYGRSTFGAGRKINVEYVSANPTGPMHVGHCRGAVVGDALANLLAFAGYDVTKEYYINDAGSQIEVLARSAFLRYRQALGEDIAEIPAGLYPGDYLVPVGEALADEYGTSLRIMPEDKWVPLVKERVIDAMMAMIREDLAALNVNHDVFFSERALHDNGAARIRTAINDLTFKGHVYKGTLPPPKGQLPEDWEDREQTLFRSTEVGDDIDRPLIKSDGSYTYFAADVAYFKDKFDRGFHEMIYVLGADHGGYVKRLEALARAISGGTAKLTVLLCQLVKLYRNGEPVKMSKRSGDFVTLRDVVDEVGRDPVRFMMLYRKSSEPLDFDFAKVTEQSKDNPVFYVQYAHARCRSVFRQAAEAFPDLDLSSVDFAAAAGAIVDPTEMQLVAKLAEYPRVVEAAALSHEPHRIAFYLYDLAAVFHGHWNKGKENPELRFVNDKNRELSIARLGLVHAVASVLKSGLSITGTSAPDEMR.

A 'HIGH' region motif is present at residues 131–141 (ANPTGPMHVGH).

This sequence belongs to the class-I aminoacyl-tRNA synthetase family. As to quaternary structure, monomer.

Its subcellular location is the cytoplasm. The enzyme catalyses tRNA(Arg) + L-arginine + ATP = L-arginyl-tRNA(Arg) + AMP + diphosphate. The protein is Arginine--tRNA ligase of Rhizobium meliloti (strain 1021) (Ensifer meliloti).